The chain runs to 200 residues: Lipopolysaccharide core heptose(II)-phosphate phosphatase (200 aa).

The signal sequence occupies residues 1-25 (MLAFCRSSLKSKKYFIILLALAAIA).

It belongs to the phosphoglycerate mutase family. Ais subfamily.

It is found in the periplasm. Its pathway is bacterial outer membrane biogenesis; lipopolysaccharide metabolism. In terms of biological role, catalyzes the dephosphorylation of heptose(II) of the outer membrane lipopolysaccharide core. This chain is Lipopolysaccharide core heptose(II)-phosphate phosphatase, found in Escherichia coli O17:K52:H18 (strain UMN026 / ExPEC).